The primary structure comprises 1101 residues: Error-prone DNA polymerase (1101 aa).

The disordered stretch occupies residues 1055–1101 (ADLGHPMDSAVGQTTPQTDSAPRPRPQPRAMHPREQAKRLFPSRDFH). The span at 1065 to 1074 (VGQTTPQTDS) shows a compositional bias: polar residues. Basic and acidic residues predominate over residues 1086-1101 (HPREQAKRLFPSRDFH).

The protein belongs to the DNA polymerase type-C family. DnaE2 subfamily.

The protein localises to the cytoplasm. It catalyses the reaction DNA(n) + a 2'-deoxyribonucleoside 5'-triphosphate = DNA(n+1) + diphosphate. Functionally, DNA polymerase involved in damage-induced mutagenesis and translesion synthesis (TLS). It is not the major replicative DNA polymerase. In Ruegeria pomeroyi (strain ATCC 700808 / DSM 15171 / DSS-3) (Silicibacter pomeroyi), this protein is Error-prone DNA polymerase.